Here is a 625-residue protein sequence, read N- to C-terminus: Chaperone protein HtpG (625 aa).

Positions M1–R337 are a; substrate-binding. A b region spans residues E338 to K554. The segment at L555–G625 is c.

This sequence belongs to the heat shock protein 90 family. Homodimer.

It is found in the cytoplasm. Functionally, molecular chaperone. Has ATPase activity. In Actinobacillus pleuropneumoniae serotype 3 (strain JL03), this protein is Chaperone protein HtpG.